The sequence spans 1659 residues: Vitellogenin (1659 aa).

Positions 1–15 are cleaved as a signal peptide; the sequence is MRAVVLALTLALVAS. Positions 24-662 constitute a Vitellogenin domain; that stretch reads FAASKTYVYK…DAATLFPRTV (639 aa). N-linked (GlcNAc...) asparagine glycosylation is present at N1089. Low complexity-rich tracts occupy residues 1090–1111 and 1119–1129; these read GTRA…SSSR and SSSSSSSSSSR. The tract at residues 1090–1163 is disordered; it reads GTRASSSSSS…SQSTSNVISR (74 aa). The 177-residue stretch at 1389 to 1565 folds into the VWFD domain; it reads VKCSMVRDTL…SWVLPSDSCR (177 aa). 2 cysteine pairs are disulfide-bonded: C1391/C1528 and C1414/C1564. The N-linked (GlcNAc...) asparagine glycan is linked to N1627.

In terms of processing, phosvitin, an egg yolk storage protein, is one of the most highly phosphorylated (10%) proteins in nature. In terms of tissue distribution, produced by the liver, secreted into the blood and then sequestered by receptor mediated endocytosis into growing oocytes, where it is generally cleaved, giving rise to the respective yolk components lipovitellin-I, phosvitin, lipovitellin-II.

In terms of biological role, precursor of the major egg-yolk proteins that are sources of nutrients during early development of oviparous organisms. This Oncorhynchus mykiss (Rainbow trout) protein is Vitellogenin (vtg1).